Here is a 36-residue protein sequence, read N- to C-terminus: MVRRRRLRRRISRRIFRRTVARVGRRRRSFRGGIRF.

It belongs to the microviridae J protein family.

It is found in the virion. Its subcellular location is the host cytoplasm. Mediates ssDNA packaging into virion, it locates to the internal surface of the capsid. Additionally, plays a role in viral attachment to the host cell. The polypeptide is DNA binding protein ORF8 (Chlamydia phage 1 (Bacteriophage Chp1)).